The following is a 317-amino-acid chain: Probable transcription factor At5g61620 (317 aa).

A CCHC-type zinc finger spans residues 12–25 (CSHCGHNGHNARTC). Residues 77–111 (DPIAAVDDTGYHSDGQIHSKKGKTAHEKKKGKPWT) form a disordered region. Over residues 94–108 (HSKKGKTAHEKKKGK) the composition is skewed to basic residues. In terms of domain architecture, HTH myb-type spans 102 to 158 (HEKKKGKPWTEEEHRNFLIGLNKLGKGDWRGIAKSFVSTRTPTQVASHAQKYFIRLN). The segment at residues 130-154 (WRGIAKSFVSTRTPTQVASHAQKYF) is a DNA-binding region (H-T-H motif). The tract at residues 173 to 206 (SLEDQKEKERNSQDASTKTPPKQPITGIQQPVVQ) is disordered. Basic and acidic residues predominate over residues 175-184 (EDQKEKERNS). Polar residues predominate over residues 185 to 206 (QDASTKTPPKQPITGIQQPVVQ).

The protein resides in the nucleus. In terms of biological role, probable transcription factor involved in somatic embryogenesis. Acts as a positive regulator of BHLH109. The polypeptide is Probable transcription factor At5g61620 (Arabidopsis thaliana (Mouse-ear cress)).